A 174-amino-acid chain; its full sequence is MANRKKQGKSKEKDNGWEERVVQVKRVTKVVKGGKKLSFRVILVVGNEQGQVGVGVGKASDVIGAVKKGVTDAKKHLVTVPLTKSNSIPHPINGISGAAQVILRPSAPGSGVIAGGSVRTVLELSGVQNILAKQLGSNNTLNNARAVLNGLTQLRTFSEAAKDRGVPIENLYSK.

The S5 DRBM domain occupies tryptophan 17 to valine 80.

The protein belongs to the universal ribosomal protein uS5 family. Part of the 30S ribosomal subunit. Contacts protein S4.

The protein resides in the plastid. It localises to the chloroplast. In terms of biological role, with S4 and S12 plays an important role in translational accuracy. The chain is Small ribosomal subunit protein uS5c (rps5) from Porphyra purpurea (Red seaweed).